The sequence spans 244 residues: UPF0280 protein Msp_1322 (244 aa).

Belongs to the UPF0280 family.

The protein is UPF0280 protein Msp_1322 of Methanosphaera stadtmanae (strain ATCC 43021 / DSM 3091 / JCM 11832 / MCB-3).